A 582-amino-acid polypeptide reads, in one-letter code: Dihydroxy-acid dehydratase 3 (582 aa).

C67 serves as a coordination point for [2Fe-2S] cluster. D99 is a binding site for Mg(2+). A [2Fe-2S] cluster-binding site is contributed by C140. Mg(2+) contacts are provided by D141 and K142. Residue K142 is modified to N6-carboxylysine. C212 is a [2Fe-2S] cluster binding site. Residue E462 participates in Mg(2+) binding. The active-site Proton acceptor is S488.

The protein belongs to the IlvD/Edd family. In terms of assembly, homodimer. [2Fe-2S] cluster serves as cofactor. The cofactor is Mg(2+).

The catalysed reaction is (2R)-2,3-dihydroxy-3-methylbutanoate = 3-methyl-2-oxobutanoate + H2O. The enzyme catalyses (2R,3R)-2,3-dihydroxy-3-methylpentanoate = (S)-3-methyl-2-oxopentanoate + H2O. The protein operates within amino-acid biosynthesis; L-isoleucine biosynthesis; L-isoleucine from 2-oxobutanoate: step 3/4. Its pathway is amino-acid biosynthesis; L-valine biosynthesis; L-valine from pyruvate: step 3/4. Functions in the biosynthesis of branched-chain amino acids. Catalyzes the dehydration of (2R,3R)-2,3-dihydroxy-3-methylpentanoate (2,3-dihydroxy-3-methylvalerate) into 2-oxo-3-methylpentanoate (2-oxo-3-methylvalerate) and of (2R)-2,3-dihydroxy-3-methylbutanoate (2,3-dihydroxyisovalerate) into 2-oxo-3-methylbutanoate (2-oxoisovalerate), the penultimate precursor to L-isoleucine and L-valine, respectively. In Bradyrhizobium diazoefficiens (strain JCM 10833 / BCRC 13528 / IAM 13628 / NBRC 14792 / USDA 110), this protein is Dihydroxy-acid dehydratase 3.